The sequence spans 212 residues: Thymidylate kinase (212 aa).

11-18 (GPEGAGKT) is a binding site for ATP.

The protein belongs to the thymidylate kinase family.

The catalysed reaction is dTMP + ATP = dTDP + ADP. Phosphorylation of dTMP to form dTDP in both de novo and salvage pathways of dTTP synthesis. This Streptococcus pneumoniae (strain ATCC 700669 / Spain 23F-1) protein is Thymidylate kinase.